Reading from the N-terminus, the 173-residue chain is ATP synthase subunit delta (173 aa).

The protein belongs to the ATPase delta chain family. F-type ATPases have 2 components, F(1) - the catalytic core - and F(0) - the membrane proton channel. F(1) has five subunits: alpha(3), beta(3), gamma(1), delta(1), epsilon(1). F(0) has three main subunits: a(1), b(2) and c(10-14). The alpha and beta chains form an alternating ring which encloses part of the gamma chain. F(1) is attached to F(0) by a central stalk formed by the gamma and epsilon chains, while a peripheral stalk is formed by the delta and b chains.

The protein localises to the cell inner membrane. Functionally, f(1)F(0) ATP synthase produces ATP from ADP in the presence of a proton or sodium gradient. F-type ATPases consist of two structural domains, F(1) containing the extramembraneous catalytic core and F(0) containing the membrane proton channel, linked together by a central stalk and a peripheral stalk. During catalysis, ATP synthesis in the catalytic domain of F(1) is coupled via a rotary mechanism of the central stalk subunits to proton translocation. This protein is part of the stalk that links CF(0) to CF(1). It either transmits conformational changes from CF(0) to CF(1) or is implicated in proton conduction. This Campylobacter jejuni subsp. jejuni serotype O:6 (strain 81116 / NCTC 11828) protein is ATP synthase subunit delta.